We begin with the raw amino-acid sequence, 221 residues long: Arginine ABC transporter permease protein ArtQ (221 aa).

In terms of domain architecture, ABC transmembrane type-1 spans 13–206 (ALMTLGLAVC…AVTLISQVGI (194 aa)). The next 5 helical transmembrane spans lie at 17 to 37 (LGLA…FAVL), 49 to 69 (VFVA…VYFG), 82 to 102 (IEFG…AAYA), 121 to 141 (GAAL…PQVW), and 186 to 206 (TWYG…QVGI).

It belongs to the binding-protein-dependent transport system permease family. HisMQ subfamily. As to quaternary structure, the complex is composed of two ATP-binding proteins (ArtP), two transmembrane proteins (ArtM and ArtQ) and a solute-binding protein (ArtI).

The protein localises to the cell inner membrane. Functionally, part of the ABC transporter complex ArtPIQM involved in arginine transport. Probably responsible for the translocation of the substrate across the membrane. The protein is Arginine ABC transporter permease protein ArtQ (artQ) of Haemophilus influenzae (strain ATCC 51907 / DSM 11121 / KW20 / Rd).